The following is a 481-amino-acid chain: ATP synthase subunit beta (481 aa).

167-174 (GGAGVGKT) is an ATP binding site.

This sequence belongs to the ATPase alpha/beta chains family. As to quaternary structure, F-type ATPases have 2 components, CF(1) - the catalytic core - and CF(0) - the membrane proton channel. CF(1) has five subunits: alpha(3), beta(3), gamma(1), delta(1), epsilon(1). CF(0) has three main subunits: a(1), b(2) and c(9-12). The alpha and beta chains form an alternating ring which encloses part of the gamma chain. CF(1) is attached to CF(0) by a central stalk formed by the gamma and epsilon chains, while a peripheral stalk is formed by the delta and b chains.

It is found in the cell membrane. It carries out the reaction ATP + H2O + 4 H(+)(in) = ADP + phosphate + 5 H(+)(out). Its function is as follows. Produces ATP from ADP in the presence of a proton gradient across the membrane. The catalytic sites are hosted primarily by the beta subunits. The protein is ATP synthase subunit beta of Corynebacterium diphtheriae (strain ATCC 700971 / NCTC 13129 / Biotype gravis).